The primary structure comprises 294 residues: Epimerase family protein SDR39U1 (294 aa).

Residues 31 to 32, 58 to 59, Glu77, Arg82, and Val160 each bind NADP(+); these read SR and LA.

Belongs to the NAD(P)-dependent epimerase/dehydratase family. SDR39U1 subfamily.

Functionally, putative NADP-dependent oxidoreductase. The chain is Epimerase family protein SDR39U1 (SDR39U1) from Bos taurus (Bovine).